The primary structure comprises 355 residues: Glucokinase (355 aa).

Residue 11–16 (GDIGGT) coordinates ATP.

Belongs to the bacterial glucokinase family.

The protein resides in the cytoplasm. It carries out the reaction D-glucose + ATP = D-glucose 6-phosphate + ADP + H(+). The chain is Glucokinase from Synechocystis sp. (strain ATCC 27184 / PCC 6803 / Kazusa).